The chain runs to 299 residues: ATP phosphoribosyltransferase (299 aa).

The protein belongs to the ATP phosphoribosyltransferase family. Long subfamily. Requires Mg(2+) as cofactor.

The protein localises to the cytoplasm. The enzyme catalyses 1-(5-phospho-beta-D-ribosyl)-ATP + diphosphate = 5-phospho-alpha-D-ribose 1-diphosphate + ATP. The protein operates within amino-acid biosynthesis; L-histidine biosynthesis; L-histidine from 5-phospho-alpha-D-ribose 1-diphosphate: step 1/9. Feedback inhibited by histidine. Catalyzes the condensation of ATP and 5-phosphoribose 1-diphosphate to form N'-(5'-phosphoribosyl)-ATP (PR-ATP). Has a crucial role in the pathway because the rate of histidine biosynthesis seems to be controlled primarily by regulation of HisG enzymatic activity. This is ATP phosphoribosyltransferase from Actinobacillus pleuropneumoniae serotype 7 (strain AP76).